A 510-amino-acid chain; its full sequence is ATP synthase subunit alpha (510 aa).

Residue 169–176 (GDRQTGKT) coordinates ATP.

Belongs to the ATPase alpha/beta chains family. In terms of assembly, F-type ATPases have 2 components, CF(1) - the catalytic core - and CF(0) - the membrane proton channel. CF(1) has five subunits: alpha(3), beta(3), gamma(1), delta(1), epsilon(1). CF(0) has four main subunits: a(1), b(1), b'(1) and c(9-12).

The protein resides in the cell inner membrane. The enzyme catalyses ATP + H2O + 4 H(+)(in) = ADP + phosphate + 5 H(+)(out). Its function is as follows. Produces ATP from ADP in the presence of a proton gradient across the membrane. The alpha chain is a regulatory subunit. This Rhodopseudomonas palustris (strain ATCC BAA-98 / CGA009) protein is ATP synthase subunit alpha.